Reading from the N-terminus, the 287-residue chain is 2-dehydro-3-deoxyphosphooctonate aldolase (287 aa).

Belongs to the KdsA family.

It is found in the cytoplasm. The enzyme catalyses D-arabinose 5-phosphate + phosphoenolpyruvate + H2O = 3-deoxy-alpha-D-manno-2-octulosonate-8-phosphate + phosphate. It participates in carbohydrate biosynthesis; 3-deoxy-D-manno-octulosonate biosynthesis; 3-deoxy-D-manno-octulosonate from D-ribulose 5-phosphate: step 2/3. It functions in the pathway bacterial outer membrane biogenesis; lipopolysaccharide biosynthesis. The polypeptide is 2-dehydro-3-deoxyphosphooctonate aldolase (Rhodopseudomonas palustris (strain TIE-1)).